A 504-amino-acid polypeptide reads, in one-letter code: Maturase K (504 aa).

It belongs to the intron maturase 2 family. MatK subfamily.

It localises to the plastid. It is found in the chloroplast. Usually encoded in the trnK tRNA gene intron. Probably assists in splicing its own and other chloroplast group II introns. The protein is Maturase K of Rorippa amphibia (Great yellow-cress).